The following is a 316-amino-acid chain: 4-hydroxy-3-methylbut-2-enyl diphosphate reductase (316 aa).

[4Fe-4S] cluster is bound at residue Cys-12. Positions 41 and 74 each coordinate (2E)-4-hydroxy-3-methylbut-2-enyl diphosphate. Dimethylallyl diphosphate-binding residues include His-41 and His-74. Positions 41 and 74 each coordinate isopentenyl diphosphate. Cys-96 contributes to the [4Fe-4S] cluster binding site. A (2E)-4-hydroxy-3-methylbut-2-enyl diphosphate-binding site is contributed by His-124. His-124 contacts dimethylallyl diphosphate. His-124 is an isopentenyl diphosphate binding site. The active-site Proton donor is Glu-126. Thr-169 contacts (2E)-4-hydroxy-3-methylbut-2-enyl diphosphate. Cys-199 contacts [4Fe-4S] cluster. (2E)-4-hydroxy-3-methylbut-2-enyl diphosphate-binding residues include Ser-227, Ser-228, Asn-229, and Ser-271. The dimethylallyl diphosphate site is built by Ser-227, Ser-228, Asn-229, and Ser-271. Residues Ser-227, Ser-228, Asn-229, and Ser-271 each coordinate isopentenyl diphosphate.

Belongs to the IspH family. [4Fe-4S] cluster serves as cofactor.

The catalysed reaction is isopentenyl diphosphate + 2 oxidized [2Fe-2S]-[ferredoxin] + H2O = (2E)-4-hydroxy-3-methylbut-2-enyl diphosphate + 2 reduced [2Fe-2S]-[ferredoxin] + 2 H(+). It carries out the reaction dimethylallyl diphosphate + 2 oxidized [2Fe-2S]-[ferredoxin] + H2O = (2E)-4-hydroxy-3-methylbut-2-enyl diphosphate + 2 reduced [2Fe-2S]-[ferredoxin] + 2 H(+). Its pathway is isoprenoid biosynthesis; dimethylallyl diphosphate biosynthesis; dimethylallyl diphosphate from (2E)-4-hydroxy-3-methylbutenyl diphosphate: step 1/1. It participates in isoprenoid biosynthesis; isopentenyl diphosphate biosynthesis via DXP pathway; isopentenyl diphosphate from 1-deoxy-D-xylulose 5-phosphate: step 6/6. Catalyzes the conversion of 1-hydroxy-2-methyl-2-(E)-butenyl 4-diphosphate (HMBPP) into a mixture of isopentenyl diphosphate (IPP) and dimethylallyl diphosphate (DMAPP). Acts in the terminal step of the DOXP/MEP pathway for isoprenoid precursor biosynthesis. The chain is 4-hydroxy-3-methylbut-2-enyl diphosphate reductase from Xanthomonas axonopodis pv. citri (strain 306).